We begin with the raw amino-acid sequence, 159 residues long: 17 kDa surface antigen (159 aa).

The first 19 residues, 1–19, serve as a signal peptide directing secretion; the sequence is MKLLSKIMIIALATSMLQA. C20 carries the N-palmitoyl cysteine lipid modification. C20 carries the S-diacylglycerol cysteine lipid modification.

It belongs to the rickettsiale 17 kDa surface antigen family.

Its subcellular location is the cell outer membrane. This is 17 kDa surface antigen (omp) from Rickettsia japonica (strain ATCC VR-1363 / YH).